A 714-amino-acid polypeptide reads, in one-letter code: Elongation factor G-like protein (714 aa).

One can recognise a tr-type G domain in the interval 21 to 289; the sequence is GGVRNVVLVG…VATRGFPSPM (269 aa). The tract at residues 30–37 is G1; the sequence is GPSGGGKT. 30–37 is a binding site for GTP; the sequence is GPSGGGKT. Residues 73 to 77 form a G2 region; the sequence is QRSVG. Residues 94-97 form a G3 region; that stretch reads DTPG. GTP-binding positions include 94–98 and 148–151; these read DTPGY and TKLD. A G4 region spans residues 148 to 151; sequence TKLD. Residues 267 to 269 form a G5 region; sequence CSS.

Belongs to the TRAFAC class translation factor GTPase superfamily. Classic translation factor GTPase family. EF-G/EF-2 subfamily.

The chain is Elongation factor G-like protein from Mycobacterium tuberculosis (strain CDC 1551 / Oshkosh).